Consider the following 240-residue polypeptide: Myogenic factor 6 (240 aa).

Residues 91–142 enclose the bHLH domain; it reads DRRKAATLRERRRLKKINEAFEALKRRTVANPNQRLPKVEILRSAINYIERL.

Efficient DNA binding requires dimerization with another bHLH protein. As to expression, skeletal muscle.

It localises to the nucleus. In terms of biological role, involved in muscle differentiation (myogenic factor). Induces fibroblasts to differentiate into myoblasts. Probable sequence specific DNA-binding protein. The protein is Myogenic factor 6 (myf6) of Xenopus laevis (African clawed frog).